The chain runs to 356 residues: GLTIRAGSYADELVKTAKTIASPGRGILAMDESNATCGKRLASIGLENTEVNRQAWRTLLVTVPTLGEYISGAILFEETLYQSTTDGRKIVDVLIEQNIIPGIKVDKGLVPLAGSNDESWCQGLDGLASRSAAYYQQGARFAKWRTVVSIPNGPSALAVKEAAWGLARYAAISQDNGLVPIVEPEILLDGEHGIDRTFEVAQKVWAEVFYYLAENNVQFEGILLKPSMVTPGAESKDKASPTKVAEYTLNLLHRRIPPAVPGIMFLSGGQSEVEATLNLNAMNKSPNPWHVSFSYARALQNTALKTWGGLPENVKAAQEALLFRAKSNSLAQLGKYYGDGESEEAKKELFVKGYSY.

Residues 1–6 constitute a chloroplast transit peptide; the sequence is GLTIRA. Substrate contacts are provided by R53 and K143. The Proton acceptor role is filled by E183. Residue K225 is the Schiff-base intermediate with dihydroxyacetone-P of the active site.

This sequence belongs to the class I fructose-bisphosphate aldolase family.

Its subcellular location is the plastid. The protein localises to the chloroplast. It carries out the reaction beta-D-fructose 1,6-bisphosphate = D-glyceraldehyde 3-phosphate + dihydroxyacetone phosphate. It functions in the pathway carbohydrate degradation; glycolysis; D-glyceraldehyde 3-phosphate and glycerone phosphate from D-glucose: step 4/4. This chain is Fructose-bisphosphate aldolase 1, chloroplastic, found in Pisum sativum (Garden pea).